The sequence spans 340 residues: MKEVVKLVLLGERQNSLNLSLYFNKYPPTIIYPEVLEDRNKKLASPSGSQRKISLLVLNQGVLQFNKIKETIEKSLPIETKVKLPQKAYELYKKYYQDYTDMLNSLHAITGKFKTQSRLVVGLGDESVYETSIRLLRNYGVPYIPGSAIKGVTRHLTYYVLAEFINEGNDFYKRAKTVQDAFMKGDPKEILSNAKVPERCSRLCKEFLRIFGEKKVPEIIDELIRIFGTQKKEGEVVFFDAIPIAEEIADKPILELDIMNPHYGPYYQSGEKNVPPPGDWYDPIPIFFLTVPKDVPFLVAVGGRDRELTEKAFSLVKLALRDLGVGAKTSLGYGRLVEYV.

This sequence belongs to the CRISPR system Cmr6 family. In terms of assembly, part of the type III-B Cmr ribonucleoprotein (RNP) complex, an elongated RNP with Cmr2 and Cmr3 as the base, with Cmr4 and Cmr5 forming a helical core along the mature crRNA (39 or 45 nt in length), while the complex is capped by Cmr6 and Cmr1. The 5' end of the crRNA is bound to Cmr2 and Cmr3, while Cmr6 and a Cmr1 subunit (Cmr1-1 or Cmr1-2) cap the 3' end of the crRNA. The target RNA lies antiparallel to the crRNA, with its 5' end near Cmr1 and Cmr6 and its 3' end near Cmr2 and Cmr3; major target cleavage occurs nears the junction of Cmr1/Cmr6 and Cmr4/Cmr, with minor cleavage occurring at 6 nt intervals which coincide with the proposed spacing of Cmr4 subunits. Interacts with Cmr4 and Cmr5.

The protein localises to the cytoplasm. In terms of biological role, CRISPR (clustered regularly interspaced short palindromic repeat), is an adaptive immune system that provides protection against mobile genetic elements (viruses, transposable elements and conjugative plasmids). CRISPR clusters contain sequences complementary to antecedent mobile elements and target invading nucleic acids. CRISPR clusters are transcribed and processed into CRISPR RNA (crRNA), formerly called psiRNA (prokaryotic silencing) in this organism. Part of the Cmr ribonucleoprotein complex which has divalent cation-dependent endoribonuclease activity specific for ssRNA complementary to the crRNA (target RNA), generating 5' hydroxy- and 3' phosphate or 2'-3' cyclic phosphate termini. Cmr4 is probably the subunit that cleaves target RNA. Cmr complex does not cleave ssDNA complementary to the crRNA. Cleavage of invading RNA is guided by the crRNA; substrate cleavage occurs a fixed distance (14 nt) from the 3' end of the crRNA. In vitro reconstitution shows Cmr1-2 and Cmr5 are not absolutely necessary for target cleavage. The chain is CRISPR system Cmr subunit Cmr6 from Pyrococcus furiosus (strain ATCC 43587 / DSM 3638 / JCM 8422 / Vc1).